The sequence spans 227 residues: ATP-dependent dethiobiotin synthetase BioD (227 aa).

12–17 (DAGKTH) serves as a coordination point for ATP. Thr-16 is a Mg(2+) binding site. Lys-37 is an active-site residue. Position 41 (Ser-41) interacts with substrate. Residues Asp-54, 116–119 (EGAG), 176–177 (NQ), and 205–207 (PYS) each bind ATP. 2 residues coordinate Mg(2+): Asp-54 and Glu-116.

This sequence belongs to the dethiobiotin synthetase family. In terms of assembly, homodimer. Mg(2+) serves as cofactor.

Its subcellular location is the cytoplasm. It carries out the reaction (7R,8S)-7,8-diammoniononanoate + CO2 + ATP = (4R,5S)-dethiobiotin + ADP + phosphate + 3 H(+). It functions in the pathway cofactor biosynthesis; biotin biosynthesis; biotin from 7,8-diaminononanoate: step 1/2. In terms of biological role, catalyzes a mechanistically unusual reaction, the ATP-dependent insertion of CO2 between the N7 and N8 nitrogen atoms of 7,8-diaminopelargonic acid (DAPA, also called 7,8-diammoniononanoate) to form a ureido ring. This chain is ATP-dependent dethiobiotin synthetase BioD, found in Pseudoalteromonas translucida (strain TAC 125).